A 349-amino-acid chain; its full sequence is Short-wave-sensitive opsin 1 (349 aa).

Residues 1–34 (MSKMPEEEEFYLFKNISSVGPWDGPQYHIAPVWA) lie on the Extracellular side of the membrane. N15 carries N-linked (GlcNAc...) asparagine glycosylation. A helical membrane pass occupies residues 35–59 (FQLQAAFMGIVFLAGLPLNSMVLVA). Residues 60–71 (TVRYKKLRHPLN) lie on the Cytoplasmic side of the membrane. A helical membrane pass occupies residues 72 to 97 (YVLVNVSVGGFLLCIFSVLPVFVNSC). Residues 98–111 (NGYFVFGRHVCALE) are Extracellular-facing. The cysteines at positions 108 and 185 are disulfide-linked. A helical transmembrane segment spans residues 112 to 131 (GFLGTVAGLVTGWSLAFLAF). The Cytoplasmic segment spans residues 132 to 150 (ERYIVICKPFGNFRFSSKH). A helical transmembrane segment spans residues 151 to 174 (ALMVVLTTWTIGIGVSIPPFFGWS). Residues 175-200 (RYIAEGLQCSCGPDWYTVGTKYRSEY) are Extracellular-facing. A helical membrane pass occupies residues 201-228 (YTWFLFIFCFIVPLSLICFSYAQLLRAL). Residues 229-250 (KAVAAQQQESATTQKAEREVSR) lie on the Cytoplasmic side of the membrane. Residues 251 to 274 (MVVVMVGSFCVCYVPYAALAMYMV) form a helical membrane-spanning segment. At 275–282 (NNRNHGLD) the chain is on the extracellular side. The chain crosses the membrane as a helical span at residues 283 to 307 (LRLVSIPAFFSKSSCIYNPIIYCFM). K294 is modified (N6-(retinylidene)lysine). At 308–349 (NKQFRACIMEMVCGKAMTDESDISSSQKTEVSTVSSSQVGPN) the chain is on the cytoplasmic side.

Belongs to the G-protein coupled receptor 1 family. Opsin subfamily. Post-translationally, phosphorylated on some or all of the serine and threonine residues present in the C-terminal region.

The protein localises to the cell membrane. The protein resides in the photoreceptor inner segment. It localises to the cell projection. It is found in the cilium. Its subcellular location is the photoreceptor outer segment. The protein localises to the cytoplasm. The protein resides in the perinuclear region. Visual pigments are the light-absorbing molecules that mediate vision. They consist of an apoprotein, opsin, covalently linked to cis-retinal. Required for the maintenance of cone outer segment organization in the ventral retina, but not essential for the maintenance of functioning cone photoreceptors. Involved in ensuring correct abundance and localization of retinal membrane proteins. May increase spectral sensitivity in dim light. In Saimiri boliviensis boliviensis (Bolivian squirrel monkey), this protein is Short-wave-sensitive opsin 1 (OPN1SW).